The sequence spans 339 residues: Serine racemase (339 aa).

Residues Ser43 and Lys63 each contribute to the ATP site. The active-site Proton acceptor is the Lys68. At Lys68 the chain carries N6-(pyridoxal phosphate)lysine. A Ca(2+)-binding site is contributed by Thr90. Residue Ser93 is the Proton acceptor of the active site. Asn95 is a pyridoxal 5'-phosphate binding site. The residue at position 122 (Cys122) is an S-nitrosocysteine. Residue Tyr130 participates in ATP binding. Asp187 is a binding site for Mg(2+). Residues Gly195, Gly196, and Gly197 each contribute to the pyridoxal 5'-phosphate site. Ca(2+) is bound by residues Glu219, Ala223, and Asp225. Residues Glu219, Ala223, and Asp225 each contribute to the Mg(2+) site. Positions 219, 223, and 225 each coordinate Mn(2+). Lys287 lines the ATP pocket. Pyridoxal 5'-phosphate is bound at residue Ser323. An ATP-binding site is contributed by Asn326.

This sequence belongs to the serine/threonine dehydratase family. Requires Mg(2+) as cofactor. Mn(2+) serves as cofactor. Ca(2+) is required as a cofactor. The cofactor is pyridoxal 5'-phosphate.

It catalyses the reaction L-serine = D-serine. The catalysed reaction is L-serine = pyruvate + NH4(+). It carries out the reaction D-serine = pyruvate + NH4(+). Its function is as follows. Catalyzes the synthesis of D-serine from L-serine. Has dehydratase activity towards both L-serine and D-serine. This Oryza sativa subsp. indica (Rice) protein is Serine racemase.